Consider the following 58-residue polypeptide: Large ribosomal subunit protein uL30 (58 aa).

The protein belongs to the universal ribosomal protein uL30 family. In terms of assembly, part of the 50S ribosomal subunit.

This Trichlorobacter lovleyi (strain ATCC BAA-1151 / DSM 17278 / SZ) (Geobacter lovleyi) protein is Large ribosomal subunit protein uL30.